Reading from the N-terminus, the 235-residue chain is Aspartate/glutamate leucyltransferase (235 aa).

Belongs to the R-transferase family. Bpt subfamily.

It localises to the cytoplasm. The enzyme catalyses N-terminal L-glutamyl-[protein] + L-leucyl-tRNA(Leu) = N-terminal L-leucyl-L-glutamyl-[protein] + tRNA(Leu) + H(+). It carries out the reaction N-terminal L-aspartyl-[protein] + L-leucyl-tRNA(Leu) = N-terminal L-leucyl-L-aspartyl-[protein] + tRNA(Leu) + H(+). Its function is as follows. Functions in the N-end rule pathway of protein degradation where it conjugates Leu from its aminoacyl-tRNA to the N-termini of proteins containing an N-terminal aspartate or glutamate. The polypeptide is Aspartate/glutamate leucyltransferase (Pseudomonas putida (strain GB-1)).